A 302-amino-acid polypeptide reads, in one-letter code: Pyridoxal 5'-phosphate synthase subunit PdxS (302 aa).

D32 contributes to the D-ribose 5-phosphate binding site. K89 functions as the Schiff-base intermediate with D-ribose 5-phosphate in the catalytic mechanism. G161 serves as a coordination point for D-ribose 5-phosphate. R173 serves as a coordination point for D-glyceraldehyde 3-phosphate. D-ribose 5-phosphate contacts are provided by residues G222 and 243-244 (GS). Residues 276–302 (ASNPGKGMKGEANADLSEGEKLQTRGV) form a disordered region. The segment covering 293–302 (EGEKLQTRGV) has biased composition (basic and acidic residues).

Belongs to the PdxS/SNZ family. In terms of assembly, in the presence of PdxT, forms a dodecamer of heterodimers.

It catalyses the reaction aldehydo-D-ribose 5-phosphate + D-glyceraldehyde 3-phosphate + L-glutamine = pyridoxal 5'-phosphate + L-glutamate + phosphate + 3 H2O + H(+). It participates in cofactor biosynthesis; pyridoxal 5'-phosphate biosynthesis. Catalyzes the formation of pyridoxal 5'-phosphate from ribose 5-phosphate (RBP), glyceraldehyde 3-phosphate (G3P) and ammonia. The ammonia is provided by the PdxT subunit. Can also use ribulose 5-phosphate and dihydroxyacetone phosphate as substrates, resulting from enzyme-catalyzed isomerization of RBP and G3P, respectively. This chain is Pyridoxal 5'-phosphate synthase subunit PdxS, found in Haloquadratum walsbyi (strain DSM 16790 / HBSQ001).